A 411-amino-acid chain; its full sequence is UPF0761 membrane protein PSPA7_4558 (411 aa).

Transmembrane regions (helical) follow at residues 36-56 (LFAVVPMMTVMFSMLSLIPAF), 92-112 (HLTWVGVVFLAVTAFTMLVTI), 132-152 (FLLYWAILSLGPLLLGAGFAV), 174-194 (LLGLMPLAFSVAAFTLLYSAV), 207-229 (GGMFTAVLFEAAKTLFGLYVSLF), and 244-264 (IFLLWIYLSWMIVLFGAVLVC).

This sequence belongs to the UPF0761 family.

The protein resides in the cell inner membrane. The sequence is that of UPF0761 membrane protein PSPA7_4558 from Pseudomonas paraeruginosa (strain DSM 24068 / PA7) (Pseudomonas aeruginosa (strain PA7)).